Reading from the N-terminus, the 364-residue chain is Cyclin-D3-2 (364 aa).

The disordered stretch occupies residues 331-364 (PPGRPIKRGAAAATTADPLPADEESRDAWPPYAA). Residues 340 to 349 (AAAATTADPL) show a composition bias toward low complexity.

This sequence belongs to the cyclin family. Cyclin D subfamily.

The sequence is that of Cyclin-D3-2 (CYCD3-2) from Oryza sativa subsp. japonica (Rice).